Consider the following 178-residue polypeptide: MSRIGKKPVVIPSGVTINVAAGNKVEVKGAKATLSKTFSTDVTFSVADNVATITPNNNSKNAVAQSGTARAILSNMVEGVSKGFERKLKIIGVGYRAKAQGNELNLTLGFSHPVVYKLPQGITAETPAPTEIILKGADKELLGKVASEVREYRKPEPYKGKGVRYEDEYVAKKEAKKK.

Belongs to the universal ribosomal protein uL6 family. In terms of assembly, part of the 50S ribosomal subunit.

This protein binds to the 23S rRNA, and is important in its secondary structure. It is located near the subunit interface in the base of the L7/L12 stalk, and near the tRNA binding site of the peptidyltransferase center. This Francisella tularensis subsp. holarctica (strain FTNF002-00 / FTA) protein is Large ribosomal subunit protein uL6.